Here is a 208-residue protein sequence, read N- to C-terminus: N-(5'-phosphoribosyl)anthranilate isomerase (208 aa).

Belongs to the TrpF family.

It catalyses the reaction N-(5-phospho-beta-D-ribosyl)anthranilate = 1-(2-carboxyphenylamino)-1-deoxy-D-ribulose 5-phosphate. It functions in the pathway amino-acid biosynthesis; L-tryptophan biosynthesis; L-tryptophan from chorismate: step 3/5. The protein is N-(5'-phosphoribosyl)anthranilate isomerase of Methanothrix thermoacetophila (strain DSM 6194 / JCM 14653 / NBRC 101360 / PT) (Methanosaeta thermophila).